Consider the following 870-residue polypeptide: Dynamin-2 (870 aa).

The Dynamin-type G domain maps to 28–294 (HLDLPQIAVV…LTNHIRESLP (267 aa)). The G1 motif stretch occupies residues 38-45 (GGQSAGKS). The GDP site is built by serine 41, glycine 43, lysine 44, serine 45, serine 46, arginine 59, and glycine 60. The interval 64 to 66 (VTR) is G2 motif. The G3 motif stretch occupies residues 136–139 (DLPG). The segment at 205–208 (TKLD) is G4 motif. Residues lysine 206, aspartate 208, and aspartate 211 each contribute to the GDP site. The residue at position 231 (tyrosine 231) is a Phosphotyrosine. Residues 235–238 (VNRS) are G5 motif. The GDP site is built by asparagine 236, arginine 237, and glutamine 239. Lysine 299 bears the N6-acetyllysine mark. The PH domain occupies 519–625 (LVIRRGWLTI…WKASFLRAGV (107 aa)). Tyrosine 597 bears the Phosphotyrosine mark. Lysine 598 is modified (N6-acetyllysine). The region spanning 653-744 (VETIRNLVDS…IIGDISTSTV (92 aa)) is the GED domain. The tract at residues 741 to 870 (TSTVSTPVPP…IRPAEPSLLD (130 aa)) is disordered. Position 755 is a phosphothreonine (threonine 755). The span at 756–767 (WLQNTSGHSPTP) shows a compositional bias: polar residues. At serine 764 the chain carries Phosphoserine; by CDK1. Residues 826 to 846 (SAPPQIPSRPARIPPGIPPGV) are compositionally biased toward pro residues. A compositionally biased stretch (low complexity) spans 847–864 (PSRRAPAAPSRPTIIRPA).

The protein belongs to the TRAFAC class dynamin-like GTPase superfamily. Dynamin/Fzo/YdjA family. In terms of assembly, oligomerizes into a helical polymer that self-assembles around the vesicle membrane, when associated to the menbrane through lipid binding. Interacts with SHANK1 and SHANK2. Interacts with SNX9. Interacts (via C-terminal proline-rich domain (PRD)) with SNX18 (via SH3 domain); this interaction regulates ATG9A and ATG16L1 trafficking from recycling endosomes to sites of autophagosome formation. Interacts with SNX33 (via SH3 domain). Interacts with MYO1E (via SH3 domain). Interacts with PSTPIP1 (via SH3 domain). Interacts with CTNND2. Interacts (via C-terminal proline-rich domain (PRD)) with BIN1 (via SH3 domain); this interaction allows the recruitment of DNM2 to the membrane tubules and inhibits self-assembly-stimulated GTPase activity on the membrane. Interacts with GABARAP, GABARAPL1 and GABARAPL2. Interacts with MAP1LC3B (the lipidate and non-lipidated LC3 form); this interaction mediates recycling endosome scission leading to autophagosome release. Interacts with ITSN1. Interacts (via C-terminal proline-rich domain (PRD)) with SH3BP4 (via SH3 domain); this interaction controls the GTPase activity and is prevented by EGFR-induced tyrosine phosphorylation of either DNM2 or SH3BP4. Interacts with MYOF. May interact with PIK3C3. May be a component of a complex composed of RAB5A (in GDP-bound form), DYN2 and PIK3C3. Interacts with SDC4; this interaction is markedly enhanced at focal ahesion site upon induction of focal adhesions and stress-fiber formation. Interacts with ACTN1. Interacts with CTTN; this interaction stimulates the intrinsic GTPase activity of DNM2 and stabilizes the association of DNM2 and actin filaments; in addition this interaction is stimulated by ligand binding to the receptor, leading to the recruitment of the DNM2-CTTN complex to the sequestered receptor-ligand complex to its internalization. Interacts with NOSTRIN (via SH3 domain); this interaction allows the recruitment of NOS3 to dynamin-positive structures. Interacts with TUBG1; this interaction may participate in centrosome cohesion. In terms of processing, phosphorylation at Ser-848 by GSK3-alpha relieves the inhibition of BIN1 and promotes endocytosis. Phosphorylation at Ser-764 by CDK1 is greatly increased upon mitotic entry. It regulates cytokinesis downstream of calcineurin, and does not affect clathrin-mediated endocytosis. Dephosphorylated by calcineurin/PP2 during cytokinesis in a Ca(2+)- and calmodulin-dependent manner. Phosphorylated on tyrosine residues by EGFR. Phosphorylated on tyrosine residues after activation of SRC. In terms of tissue distribution, expressed in most tissues during embryonic development, including the peripheral nervous system although no expression is evident in skeletal muscle or heart.

The protein localises to the cytoplasm. It is found in the cytoskeleton. It localises to the cytoplasmic vesicle. The protein resides in the clathrin-coated vesicle. Its subcellular location is the cell projection. The protein localises to the uropodium. It is found in the endosome. It localises to the microtubule organizing center. The protein resides in the centrosome. Its subcellular location is the centriole. The protein localises to the recycling endosome. It is found in the phagocytic cup. It localises to the phagosome membrane. The protein resides in the podosome. Its subcellular location is the cell junction. The protein localises to the postsynaptic density. It is found in the synapse. It localises to the synaptosome. The protein resides in the midbody. Its subcellular location is the membrane. The protein localises to the clathrin-coated pit. The catalysed reaction is GTP + H2O = GDP + phosphate + H(+). Its function is as follows. Catalyzes the hydrolysis of GTP and utilizes this energy to mediate vesicle scission at plasma membrane during endocytosis and filament remodeling at many actin structures during organization of the actin cytoskeleton. Plays an important role in vesicular trafficking processes, namely clathrin-mediated endocytosis (CME), exocytic and clathrin-coated vesicle from the trans-Golgi network, and PDGF stimulated macropinocytosis. During vesicular trafficking process, associates to the membrane, through lipid binding, and self-assembles into ring-like structure through oligomerization to form a helical polymer around the vesicle membrane and leading to vesicle scission. Plays a role in organization of the actin cytoskeleton by mediating arrangement of stress fibers and actin bundles in podocytes. During organization of the actin cytoskeleton, self-assembles into ring-like structure that directly bundles actin filaments to form typical membrane tubules decorated with dynamin spiral polymers. Self-assembly increases GTPase activity and the GTP hydrolysis causes the rapid depolymerization of dynamin spiral polymers, and results in dispersion of actin bundles. Remodels, through its interaction with CTTN, bundled actin filaments in a GTPase-dependent manner and plays a role in orchestrating the global actomyosin cytoskeleton. The interaction with CTTN stabilizes the interaction of DNM2 and actin filaments and stimulates the intrinsic GTPase activity that results in actin filament-barbed ends and increases the sensitivity of filaments in bundles to the actin depolymerizing factor, CFL1. Plays a role in the autophagy process, by participating in the formation of ATG9A vesicles destined for the autophagosomes through its interaction with SNX18, by mediating recycling endosome scission leading to autophagosome release through MAP1LC3B interaction. Also regulates maturation of apoptotic cell corpse-containing phagosomes by recruiting PIK3C3 to the phagosome membrane. Also plays a role in cytokinesis. May participate in centrosome cohesion through its interaction with TUBG1. Plays a role in the regulation of neuron morphology, axon growth and formation of neuronal growth cones. Involved in membrane tubulation. This Mus musculus (Mouse) protein is Dynamin-2.